A 195-amino-acid polypeptide reads, in one-letter code: uncharacterized protein (195 aa).

In terms of domain architecture, HTH tetR-type spans 10–70 (EETVARLLQA…ATAYEVLRRQ (61 aa)). The segment at residues 33 to 52 (SAAVITKRAGVSVGALFRHF) is a DNA-binding region (H-T-H motif).

This is an uncharacterized protein from Mycobacterium tuberculosis (strain CDC 1551 / Oshkosh).